The primary structure comprises 72 residues: Conotoxin Vc6.16 (72 aa).

A signal peptide spans 1–19; it reads MQKLIILLLVAAVLMSTQA. Residues 20–44 constitute a propeptide that is removed on maturation; that stretch reads LFQEKRPKEKIDLLSKRKTDAEKQQ. 3 disulfide bridges follow: C48-C62, C55-C66, and C61-C71.

The protein belongs to the conotoxin O2 superfamily. Expressed by the venom duct.

It is found in the secreted. In terms of biological role, inhibits voltage-gated ion channels. The chain is Conotoxin Vc6.16 from Conus victoriae (Queen Victoria cone).